The chain runs to 223 residues: Endonuclease V (223 aa).

The Mg(2+) site is built by Asp35 and Asp103.

It belongs to the endonuclease V family. Mg(2+) serves as cofactor.

It is found in the cytoplasm. The catalysed reaction is Endonucleolytic cleavage at apurinic or apyrimidinic sites to products with a 5'-phosphate.. Its function is as follows. DNA repair enzyme involved in the repair of deaminated bases. Selectively cleaves double-stranded DNA at the second phosphodiester bond 3' to a deoxyinosine leaving behind the intact lesion on the nicked DNA. The protein is Endonuclease V of Salmonella enteritidis PT4 (strain P125109).